The following is a 426-amino-acid chain: UPF0597 protein CLB_1750 (426 aa).

This sequence belongs to the UPF0597 family.

The polypeptide is UPF0597 protein CLB_1750 (Clostridium botulinum (strain ATCC 19397 / Type A)).